A 279-amino-acid polypeptide reads, in one-letter code: Thymidylate synthase (279 aa).

133 to 134 (RR) lines the dUMP pocket. Cys154 (nucleophile) is an active-site residue. DUMP is bound by residues 178–181 (RSND), Asn189, and 219–221 (HIY). Asp181 lines the (6R)-5,10-methylene-5,6,7,8-tetrahydrofolate pocket. Ala278 lines the (6R)-5,10-methylene-5,6,7,8-tetrahydrofolate pocket.

The protein belongs to the thymidylate synthase family. Bacterial-type ThyA subfamily. Homodimer.

The protein resides in the cytoplasm. It catalyses the reaction dUMP + (6R)-5,10-methylene-5,6,7,8-tetrahydrofolate = 7,8-dihydrofolate + dTMP. The protein operates within pyrimidine metabolism; dTTP biosynthesis. Functionally, catalyzes the reductive methylation of 2'-deoxyuridine-5'-monophosphate (dUMP) to 2'-deoxythymidine-5'-monophosphate (dTMP) while utilizing 5,10-methylenetetrahydrofolate (mTHF) as the methyl donor and reductant in the reaction, yielding dihydrofolate (DHF) as a by-product. This enzymatic reaction provides an intracellular de novo source of dTMP, an essential precursor for DNA biosynthesis. This Streptococcus pyogenes serotype M6 (strain ATCC BAA-946 / MGAS10394) protein is Thymidylate synthase.